The following is a 189-amino-acid chain: Sec-independent protein translocase protein TatB (189 aa).

A helical transmembrane segment spans residues 1-21; it reads MFGVGIFEVLVILIVAVIALG. The disordered stretch occupies residues 152 to 189; it reads TQKPQNSIDSINSKESSVDSLHSPSIVESTQSSSSKDS. The span at 153 to 189 shows a compositional bias: polar residues; it reads QKPQNSIDSINSKESSVDSLHSPSIVESTQSSSSKDS.

The protein belongs to the TatB family. The Tat system comprises two distinct complexes: a TatABC complex, containing multiple copies of TatA, TatB and TatC subunits, and a separate TatA complex, containing only TatA subunits. Substrates initially bind to the TatABC complex, which probably triggers association of the separate TatA complex to form the active translocon.

Its subcellular location is the cell inner membrane. Functionally, part of the twin-arginine translocation (Tat) system that transports large folded proteins containing a characteristic twin-arginine motif in their signal peptide across membranes. Together with TatC, TatB is part of a receptor directly interacting with Tat signal peptides. TatB may form an oligomeric binding site that transiently accommodates folded Tat precursor proteins before their translocation. In Helicobacter hepaticus (strain ATCC 51449 / 3B1), this protein is Sec-independent protein translocase protein TatB.